Reading from the N-terminus, the 78-residue chain is Acyl carrier protein (78 aa).

The 76-residue stretch at 2-77 (SNLEERVKKI…AAIDYVTANA (76 aa)) folds into the Carrier domain. Serine 37 carries the O-(pantetheine 4'-phosphoryl)serine modification.

Belongs to the acyl carrier protein (ACP) family. 4'-phosphopantetheine is transferred from CoA to a specific serine of apo-ACP by AcpS. This modification is essential for activity because fatty acids are bound in thioester linkage to the sulfhydryl of the prosthetic group.

The protein localises to the cytoplasm. It functions in the pathway lipid metabolism; fatty acid biosynthesis. Functionally, carrier of the growing fatty acid chain in fatty acid biosynthesis. The protein is Acyl carrier protein of Vibrio vulnificus (strain CMCP6).